The following is a 452-amino-acid chain: tRNA-2-methylthio-N(6)-dimethylallyladenosine synthase (452 aa).

Positions 5 to 121 (RRYHITTFGC…LADLLAQVEA (117 aa)) constitute an MTTase N-terminal domain. 6 residues coordinate [4Fe-4S] cluster: C14, C50, C84, C156, C160, and C163. The region spanning 142–379 (RDSTITAWVN…NHLVAQMAAD (238 aa)) is the Radical SAM core domain. A TRAM domain is found at 382-446 (QRYLGRTEEV…AFSLTGQILS (65 aa)).

This sequence belongs to the methylthiotransferase family. MiaB subfamily. Monomer. Requires [4Fe-4S] cluster as cofactor.

Its subcellular location is the cytoplasm. It catalyses the reaction N(6)-dimethylallyladenosine(37) in tRNA + (sulfur carrier)-SH + AH2 + 2 S-adenosyl-L-methionine = 2-methylsulfanyl-N(6)-dimethylallyladenosine(37) in tRNA + (sulfur carrier)-H + 5'-deoxyadenosine + L-methionine + A + S-adenosyl-L-homocysteine + 2 H(+). Its function is as follows. Catalyzes the methylthiolation of N6-(dimethylallyl)adenosine (i(6)A), leading to the formation of 2-methylthio-N6-(dimethylallyl)adenosine (ms(2)i(6)A) at position 37 in tRNAs that read codons beginning with uridine. The chain is tRNA-2-methylthio-N(6)-dimethylallyladenosine synthase from Synechococcus elongatus (strain ATCC 33912 / PCC 7942 / FACHB-805) (Anacystis nidulans R2).